The following is a 1047-amino-acid chain: Ubiquitin carboxyl-terminal hydrolase 48 (1047 aa).

The region spanning 89 to 416 (VGLTNLGATC…NAYMLVYKQQ (328 aa)) is the USP domain. Cys-98 acts as the Nucleophile in catalysis. Residue His-348 is the Proton acceptor of the active site. 3 consecutive DUSP domains span residues 457–551 (QSVD…RSSL), 567–697 (NQLN…DHDP), and 717–830 (MMAN…RIHD). The disordered stretch occupies residues 609–647 (LEEDEEETKHNNSKINGEKSSPGTKADGVKGDSEDGDGE). Over residues 621-631 (SKINGEKSSPG) the composition is skewed to polar residues. A compositionally biased stretch (basic and acidic residues) spans 635–647 (DGVKGDSEDGDGE). Residues 887 to 928 (PEFSVSGSDVEDEKEEPKLDGEKDPDFSQTEGGAKRQKLNDT) are disordered. Residues 901–912 (EEPKLDGEKDPD) are compositionally biased toward basic and acidic residues. A Ubiquitin-like domain is found at 961–1012 (VSANQTLKDLKIQIMHAFSVAPFDQNLSIDGRCLKDDSATLGSLGVIPESII).

It belongs to the peptidase C19 family.

Its subcellular location is the cytoplasm. It localises to the nucleus. The enzyme catalyses Thiol-dependent hydrolysis of ester, thioester, amide, peptide and isopeptide bonds formed by the C-terminal Gly of ubiquitin (a 76-residue protein attached to proteins as an intracellular targeting signal).. Recognizes and hydrolyzes the peptide bond at the C-terminal Gly of ubiquitin. Involved in the processing of poly-ubiquitin precursors as well as that of ubiquitinated proteins. This is Ubiquitin carboxyl-terminal hydrolase 48 (usp48) from Danio rerio (Zebrafish).